The primary structure comprises 753 residues: 5-methyltetrahydropteroyltriglutamate--homocysteine methyltransferase (753 aa).

5-methyltetrahydropteroyltri-L-glutamate is bound by residues R17–K20 and K117. Residues I431–S433 and E484 contribute to the L-homocysteine site. Residues I431–S433 and E484 each bind L-methionine. 5-methyltetrahydropteroyltri-L-glutamate contacts are provided by residues R515–C516 and W561. D599 serves as a coordination point for L-homocysteine. An L-methionine-binding site is contributed by D599. E605 is a binding site for 5-methyltetrahydropteroyltri-L-glutamate. 3 residues coordinate Zn(2+): H641, C643, and E665. The Proton donor role is filled by H694. C726 contacts Zn(2+).

The protein belongs to the vitamin-B12 independent methionine synthase family. It depends on Zn(2+) as a cofactor.

The enzyme catalyses 5-methyltetrahydropteroyltri-L-glutamate + L-homocysteine = tetrahydropteroyltri-L-glutamate + L-methionine. Its pathway is amino-acid biosynthesis; L-methionine biosynthesis via de novo pathway; L-methionine from L-homocysteine (MetE route): step 1/1. Catalyzes the transfer of a methyl group from 5-methyltetrahydrofolate to homocysteine resulting in methionine formation. This Escherichia coli O8 (strain IAI1) protein is 5-methyltetrahydropteroyltriglutamate--homocysteine methyltransferase.